Here is a 398-residue protein sequence, read N- to C-terminus: Cation channel sperm-associated protein 3 (398 aa).

Topologically, residues 1-48 (MSQHRHQRHSRVISSSPVDTTSVGFCPTFKKFKRNDDECRAFVKRVIM) are cytoplasmic. The chain crosses the membrane as a helical span at residues 49–71 (SRFFKIIMISTVTSNAFFMALWT). At 72–80 (SYDIRYRLF) the chain is on the extracellular side. A helical transmembrane segment spans residues 81–107 (RLLEFSEIFFVSICTSELSMKVYVDPI). Position 108 (Asn108) is a topological domain, cytoplasmic. Residues 109–131 (YWKNGYNLLDVIIIIVMFLPYAL) traverse the membrane as a helical segment. Topologically, residues 132-143 (RQLMGKQFTYLY) are extracellular. A helical transmembrane segment spans residues 144–160 (IADGMQSLRILKLIGYS). Residues 161-168 (QGIRTLIT) are Cytoplasmic-facing. A helical transmembrane segment spans residues 169-195 (AVGQTVYTVASVLLLLFLLMYIFAILG). Topologically, residues 196–216 (FCLFGSPDNGDHDNWGNLAAA) are extracellular. Residues 217-236 (FFTLFSLATVDGWTDLQKQL) constitute an intramembrane region (helical; Pore-forming). At 237–242 (DNREFA) the chain is on the extracellular side. A helical membrane pass occupies residues 243–268 (LSRAFTIIFILLASFIFLNMFVGVMI). Residues 269 to 398 (MHTEDSIRKF…PQSLEKVDEK (130 aa)) lie on the Cytoplasmic side of the membrane.

The protein belongs to the cation channel sperm-associated (TC 1.A.1.19) family. As to quaternary structure, component of the CatSper complex or CatSpermasome composed of the core pore-forming members CATSPER1, CATSPER2, CATSPER3 and CATSPER4 as well as auxiliary members CATSPERB, CATSPERG, CATSPERD, CATSPERE, CATSPERZ, C2CD6/CATSPERT, TMEM249, TMEM262 and EFCAB9. HSPA1 may be an additional auxiliary complex member. The core complex members CATSPER1, CATSPER2, CATSPER3 and CATSPER4 form a heterotetrameric channel. The auxiliary CATSPERB, CATSPERG, CATSPERD and CATSPERE subunits form a pavilion-like structure over the pore which stabilizes the complex through interactions with CATSPER4, CATSPER3, CATSPER1 and CATSPER2 respectively. TMEM262/CATSPERH interacts with CATSPERB, further stabilizing the complex. C2CD6/CATSPERT interacts at least with CATSPERD and is required for targeting the CatSper complex in the flagellar membrane. Testis-specific.

The protein localises to the cell projection. The protein resides in the cilium. It is found in the flagellum membrane. The enzyme catalyses Ca(2+)(in) = Ca(2+)(out). With respect to regulation, the CatSper calcium channel is indirectly activated by extracellular progesterone and prostaglandins following the sequence: progesterone &gt; PGF1-alpha = PGE1 &gt; PGA1 &gt; PGE2 &gt;&gt; PGD2. The CatSper calcium channel is directly inhibited by endocannabinoid 2-arachidonoylglycerol (2AG). Indirect activation by progesterone takes place via the following mechanism: progesterone binds and activates the acylglycerol lipase ABHD2, which in turn mediates hydrolysis of 2AG inhibitor, relieving inhibition of the CatSper channel. The primary effect of progesterone activation is to shift voltage dependence towards more physiological, negative membrane potentials; it is not mediated by metabotropic receptors and second messengers. Sperm capacitation enhances the effect of progesterone by providing additional negative shift. Also activated by the elevation of intracellular pH. Its function is as follows. Pore-forming subunit of the CatSper complex, a sperm-specific voltage-gated calcium channel that plays a central role in calcium-dependent physiological responses essential for successful fertilization, such as sperm hyperactivation, acrosome reaction and chemotaxis towards the oocyte. This Homo sapiens (Human) protein is Cation channel sperm-associated protein 3 (CATSPER3).